Reading from the N-terminus, the 821-residue chain is MFERFTEKAIKVIMLAQEEARRLGHNFVGTEQILLGLVGEGTGIAAQVLKSMNVNLKDARVEVEKIIGRGSGFVAVEIPFTPRAKRVLELSLEEARQLGHNYIGTEHLLMGLVREGEGVAARVLENLAVDVSSIRAEVIQMLGENAEANVSGSNATQARSKTPTLEEFGSNLTQMAIEGGLDPVVGRQKEIERVIQILGRRTKNNPVLIGEPGVGKTAIAEGLAQRIANRDVPSILEDKLVITLDVGLLVAGTKYRGEFEERLKRIMDEIKSADNVILVIDEVHTLIGAGAAEGAIDAANLLKPALARGELQCIGATTLEEYRKHIEKDPALERRFHPVVVGEPSVEETIEILFGLRDRYEKHHQLTMSDGALAAAAKYANQYISDRFLPDKAIDLIDEAGSRVRLLNSQLPPAARELDKELRAVLKTKDEAIRAQKYETAEQYRAREMEIKAQIAAIAQSKKNEPDLNLEDPVVTEDDIAEIVAAWTGIPVTKLTKSESEKLMQMEETLHGRIIGQDEAVIAVSRAIRRARVGLKNPNRPIASFIFSGPTGVGKTELTKALASYFFGSEASMIRLDMSEYMERHTVSKLIGSPPGYVGYSEGGYLTEAVRKKPYTVILFDEIEKAHPDIFNLLLQILEDGRLTDAKGRTIDFKNTLLIMTSNIGSKVIEKGGGSLGFELSEDQTESQYTRVRSLVNEELKQYFRPEFLNRLDEIIVFRQLTKDEVREIAELMLNEVFARIKQQDIQLNVTERFKERLVEEGYNPSYGARPLRRAVMRLLEDSLAEEVLSGKIKAGDSPVVDVTNEGEVKVLLGEKLELLT.

Residues 2–144 (FERFTEKAIK…RAEVIQMLGE (143 aa)) enclose the Clp R domain. 2 repeat regions span residues 5 to 70 (FTEK…IGRG) and 80 to 144 (FTPR…MLGE). Residues 210 to 217 (GEPGVGKT) and 549 to 556 (GPTGVGKT) each bind ATP.

It belongs to the ClpA/ClpB family.

Its subcellular location is the plastid. The protein resides in the chloroplast. May interact with a ClpP-like protease involved in degradation of denatured proteins in the chloroplast. In Porphyra purpurea (Red seaweed), this protein is ATP-dependent Clp protease ATP-binding subunit ClpA homolog (clpC).